A 102-amino-acid polypeptide reads, in one-letter code: Small ribosomal subunit protein uS10 (102 aa).

Belongs to the universal ribosomal protein uS10 family. In terms of assembly, part of the 30S ribosomal subunit.

Functionally, involved in the binding of tRNA to the ribosomes. This Parvibaculum lavamentivorans (strain DS-1 / DSM 13023 / NCIMB 13966) protein is Small ribosomal subunit protein uS10.